A 286-amino-acid polypeptide reads, in one-letter code: Acetyl-coenzyme A carboxylase carboxyl transferase subunit beta (286 aa).

The CoA carboxyltransferase N-terminal domain occupies 26-286; it reads LWEKCVKCDA…LAKFTRRAAV (261 aa). Residues cysteine 30, cysteine 33, cysteine 49, and cysteine 52 each contribute to the Zn(2+) site. The C4-type zinc-finger motif lies at 30–52; the sequence is CVKCDAVLYKPELEKNLDVCPKC.

This sequence belongs to the AccD/PCCB family. In terms of assembly, acetyl-CoA carboxylase is a heterohexamer composed of biotin carboxyl carrier protein (AccB), biotin carboxylase (AccC) and two subunits each of ACCase subunit alpha (AccA) and ACCase subunit beta (AccD). Requires Zn(2+) as cofactor.

It is found in the cytoplasm. The enzyme catalyses N(6)-carboxybiotinyl-L-lysyl-[protein] + acetyl-CoA = N(6)-biotinyl-L-lysyl-[protein] + malonyl-CoA. It participates in lipid metabolism; malonyl-CoA biosynthesis; malonyl-CoA from acetyl-CoA: step 1/1. Component of the acetyl coenzyme A carboxylase (ACC) complex. Biotin carboxylase (BC) catalyzes the carboxylation of biotin on its carrier protein (BCCP) and then the CO(2) group is transferred by the transcarboxylase to acetyl-CoA to form malonyl-CoA. This is Acetyl-coenzyme A carboxylase carboxyl transferase subunit beta from Cellvibrio japonicus (strain Ueda107) (Pseudomonas fluorescens subsp. cellulosa).